The following is a 436-amino-acid chain: FAD-dependent monooxygenase pigN (436 aa).

Positions 40, 53, and 118 each coordinate FAD. The active site involves Arg-200. Asp-316 and Ala-329 together coordinate FAD.

Belongs to the paxM FAD-dependent monooxygenase family. FAD serves as cofactor.

The protein operates within secondary metabolite biosynthesis. In terms of biological role, FAD-dependent monooxygenase; part of the gene cluster that mediates the biosynthesis of azaphilone pigments (MonAzPs), a complex mixture of compounds with a common azaphilone skeleton very widely used as food colorants. Within the pathway, pigN hydroxylates the benzaldehyde M7PKS-1 intermediate at C-4 to form the pyran ring. The first step of the pathway is performed by the nrPKS pigA that forms the hexaketide precursor from successive condensations of five malonyl-CoA units, with a simple acetyl-CoA starter unit. The role of esterase pigG is not clear, but it may play at most a supplementary role in the formation of the benzaldehyde produced by the pigA nrPKS. This very reactive benzaldehyde is intercepted by the pigC ketoreductase that to provide the first stable enzyme-free MonAzPs intermediate, 6-(4-hydroxy-2-oxopentyl)-3-methyl-2,4-dioxocyclohexane carbaldehyde, also known as M7PKS-1. The FAD-dependent monooxygenase pigN hydroxylates M7PKS-1 at C-4, which triggers the formation of the pyran ring. PigJ, pigK and pigD are involved in the acetylation of the pyran ring. PigJ and pigK form the two subunits of a dedicated fungal FAS that produces the side chain fatty acyl moiety of MonAzPs and pigD transfers the fatty acyl chain to the C-4 alcohol. PigM and pigO are involved in the elimination of the omega-1 alcohol. PigM acts as an O-acetyltransferase that synthesizes the putative O-11 acetyl intermediate whereas pigO eliminates acetic acid to yield an intermediate with a C10(11) double bond. The dehydration of the C-11 alcohol followed by the reduction of the C6(7) double bond by the NAD(P)H-dependent oxidoreductase pigE increases the electrophilicity of the C-5 ketone of the resulting acyl benzopyran. This in turn sets up the C-5 ketone for an intramolecular Knoevenagel aldol condensation with the C-20 enol of the side chain. This condensation affords the characteristic linear tricyclic carbon skeletons of the yellow pigments that serve as the common precursors for the classical yellow pigments monascin and ankaflavin, orange pigments rubopunctatin and monascorubrin, and red pigments ribropunctamine and monascorubramine. The FAD-dependent oxidoreductase pigF is especially invoved in the biosynthesis of orange and red pigments via desaturation of C6(7). This chain is FAD-dependent monooxygenase pigN, found in Monascus ruber (Mold).